The sequence spans 386 residues: Queuine tRNA-ribosyltransferase (386 aa).

The Proton acceptor role is filled by Asp-99. Residues 99–103 (DSGGF), Asp-153, Gln-198, and Gly-225 contribute to the substrate site. Residues 256 to 262 (GVGKPED) form an RNA binding region. Catalysis depends on Asp-275, which acts as the Nucleophile. Residues 280–284 (TRNAR) form an RNA binding; important for wobble base 34 recognition region. Positions 313, 315, 318, and 344 each coordinate Zn(2+).

The protein belongs to the queuine tRNA-ribosyltransferase family. In terms of assembly, homodimer. Within each dimer, one monomer is responsible for RNA recognition and catalysis, while the other monomer binds to the replacement base PreQ1. Zn(2+) is required as a cofactor.

It carries out the reaction 7-aminomethyl-7-carbaguanine + guanosine(34) in tRNA = 7-aminomethyl-7-carbaguanosine(34) in tRNA + guanine. The protein operates within tRNA modification; tRNA-queuosine biosynthesis. Its function is as follows. Catalyzes the base-exchange of a guanine (G) residue with the queuine precursor 7-aminomethyl-7-deazaguanine (PreQ1) at position 34 (anticodon wobble position) in tRNAs with GU(N) anticodons (tRNA-Asp, -Asn, -His and -Tyr). Catalysis occurs through a double-displacement mechanism. The nucleophile active site attacks the C1' of nucleotide 34 to detach the guanine base from the RNA, forming a covalent enzyme-RNA intermediate. The proton acceptor active site deprotonates the incoming PreQ1, allowing a nucleophilic attack on the C1' of the ribose to form the product. After dissociation, two additional enzymatic reactions on the tRNA convert PreQ1 to queuine (Q), resulting in the hypermodified nucleoside queuosine (7-(((4,5-cis-dihydroxy-2-cyclopenten-1-yl)amino)methyl)-7-deazaguanosine). The protein is Queuine tRNA-ribosyltransferase of Acinetobacter baylyi (strain ATCC 33305 / BD413 / ADP1).